Consider the following 356-residue polypeptide: S-adenosylmethionine:tRNA ribosyltransferase-isomerase (356 aa).

This sequence belongs to the QueA family. As to quaternary structure, monomer.

Its subcellular location is the cytoplasm. The enzyme catalyses 7-aminomethyl-7-carbaguanosine(34) in tRNA + S-adenosyl-L-methionine = epoxyqueuosine(34) in tRNA + adenine + L-methionine + 2 H(+). It participates in tRNA modification; tRNA-queuosine biosynthesis. Transfers and isomerizes the ribose moiety from AdoMet to the 7-aminomethyl group of 7-deazaguanine (preQ1-tRNA) to give epoxyqueuosine (oQ-tRNA). This chain is S-adenosylmethionine:tRNA ribosyltransferase-isomerase, found in Escherichia coli (strain UTI89 / UPEC).